We begin with the raw amino-acid sequence, 605 residues long: Glucose-6-phosphate isomerase (605 aa).

The active-site Proton donor is the glutamate 410. Active-site residues include histidine 441 and lysine 569.

This sequence belongs to the GPI family.

The protein resides in the cytoplasm. The catalysed reaction is alpha-D-glucose 6-phosphate = beta-D-fructose 6-phosphate. Its pathway is carbohydrate degradation; glycolysis; D-glyceraldehyde 3-phosphate and glycerone phosphate from D-glucose: step 2/4. This chain is Glucose-6-phosphate isomerase (PGI), found in Leishmania mexicana.